The primary structure comprises 281 residues: 2,3,4,5-tetrahydropyridine-2,6-dicarboxylate N-succinyltransferase (281 aa).

Arginine 108 and aspartate 145 together coordinate substrate.

The protein belongs to the transferase hexapeptide repeat family. As to quaternary structure, homotrimer.

Its subcellular location is the cytoplasm. It catalyses the reaction (S)-2,3,4,5-tetrahydrodipicolinate + succinyl-CoA + H2O = (S)-2-succinylamino-6-oxoheptanedioate + CoA. It functions in the pathway amino-acid biosynthesis; L-lysine biosynthesis via DAP pathway; LL-2,6-diaminopimelate from (S)-tetrahydrodipicolinate (succinylase route): step 1/3. The polypeptide is 2,3,4,5-tetrahydropyridine-2,6-dicarboxylate N-succinyltransferase (Methylobacterium nodulans (strain LMG 21967 / CNCM I-2342 / ORS 2060)).